We begin with the raw amino-acid sequence, 419 residues long: Hyaluronan synthase (419 aa).

5 helical membrane passes run 8 to 28 (LIVL…MYLF), 33 to 53 (VGIY…LSFL), 318 to 338 (IVAL…VAIG), 345 to 365 (AIQL…IVAL), and 376 to 396 (PASF…LQPL).

This sequence belongs to the NodC/HAS family. Mg(2+) serves as cofactor.

It is found in the cell membrane. It carries out the reaction [hyaluronan](n) + UDP-N-acetyl-alpha-D-glucosamine = N-acetyl-beta-D-glucosaminyl-(1-&gt;4)-[hyaluronan](n) + UDP + H(+). The enzyme catalyses N-acetyl-beta-D-glucosaminyl-(1-&gt;4)-[hyaluronan](n) + UDP-alpha-D-glucuronate = [hyaluronan](n+1) + UDP + H(+). It participates in glycan biosynthesis; hyaluronan biosynthesis. In terms of biological role, glycosaminoglycan synthesis. The hyaluronic acid capsule is involved in the pathogenicity of group A Streptococci; it may be the major virulence determinant. The sequence is that of Hyaluronan synthase (hasA) from Streptococcus pyogenes serotype M18 (strain MGAS8232).